The primary structure comprises 433 residues: MSAAARTFISIHIGVCFDEMDSPGSSAPSPPDLTIIPKISSKKCQICENPAHGKHFGAVTCRACAAFFRRFGISNNFKPCKTENKCSFRKNGYFSCKKCRMQRCLQFGMTIDNFQFDREPFNPLKMNVGIPQTVDTFSGRPSLILFSAPSGSSGPKRYIDVQFLVDRAVEVLLNGSETPYQVSNVLQKLAIGLQNIRGPQQKVSQIVTKIGKEGIFKLWEEEMLRMAKWLTYFDDFQRLPHSVQIEILNGVWFLFGRLENIASTALARKRKLCKDDMVMTCVNKNVLICDLRTLEIDLSWCSKYTFQQLKFFDQYDDLRQLDILINAMLDLEPTHEELSYMICQLCFHQVGKKLQGNILKTVEKLQEVLSNNLHDYYVNQMNQPKYSKRIARMMKINNTVEQCLYRDRVKADLMKVFEVFHVECSHPGIFLNA.

The segment at residues 41–116 (SKKCQICENP…FGMTIDNFQF (76 aa)) is a DNA-binding region (nuclear receptor). 2 NR C4-type zinc fingers span residues 44–64 (CQIC…CRAC) and 80–104 (CKTE…MQRC). The region spanning 177–433 (ETPYQVSNVL…CSHPGIFLNA (257 aa)) is the NR LBD domain.

It belongs to the nuclear hormone receptor family.

It localises to the nucleus. In terms of biological role, orphan nuclear receptor. The chain is Nuclear hormone receptor family member nhr-98 (nhr-98) from Caenorhabditis elegans.